The primary structure comprises 352 residues: Protein RecA (352 aa).

Gly67–Thr74 is a binding site for ATP.

This sequence belongs to the RecA family.

It localises to the cytoplasm. Its function is as follows. Can catalyze the hydrolysis of ATP in the presence of single-stranded DNA, the ATP-dependent uptake of single-stranded DNA by duplex DNA, and the ATP-dependent hybridization of homologous single-stranded DNAs. It interacts with LexA causing its activation and leading to its autocatalytic cleavage. This is Protein RecA from Enterobacter sp. (strain 638).